The sequence spans 409 residues: Glucan endo-1,6-beta-glucosidase B (409 aa).

The N-terminal stretch at 1–16 is a signal peptide; sequence MKFILPLFTSLPVALA. Residue Asn-35 is glycosylated (N-linked (GlcNAc...) asparagine). The active-site Proton donor is the Glu-228. The active-site Nucleophile is Glu-330.

This sequence belongs to the glycosyl hydrolase 5 (cellulase A) family.

The protein localises to the secreted. It catalyses the reaction Random hydrolysis of (1-&gt;6)-linkages in (1-&gt;6)-beta-D-glucans.. Beta-glucanases participate in the metabolism of beta-glucan, the main structural component of the cell wall. Acts on lutean, pustulan and 1,6-oligo-beta-D-glucosides. The sequence is that of Glucan endo-1,6-beta-glucosidase B (exgB) from Emericella nidulans (strain FGSC A4 / ATCC 38163 / CBS 112.46 / NRRL 194 / M139) (Aspergillus nidulans).